The primary structure comprises 55 residues: Large ribosomal subunit protein bL32 (55 aa).

Basic residues predominate over residues 1-19 (MAVPKRRMSRANTHSRRSQ). A disordered region spans residues 1–20 (MAVPKRRMSRANTHSRRSQW).

This sequence belongs to the bacterial ribosomal protein bL32 family.

The sequence is that of Large ribosomal subunit protein bL32 from Corynebacterium jeikeium (strain K411).